Consider the following 544-residue polypeptide: Regulator of G-protein signaling 14 (544 aa).

The segment at 19-59 is disordered; the sequence is VSDGELTSTSGSQAQGEGRGSSLSIHSLPSGPSSPFSTDEQ. Phosphoserine is present on residues Ser-20, Ser-42, Ser-45, Ser-143, Ser-199, Ser-203, Ser-218, and Ser-286. The span at 23 to 58 shows a compositional bias: polar residues; sequence ELTSTSGSQAQGEGRGSSLSIHSLPSGPSSPFSTDE. Residues 67–184 form the RGS domain; sequence SFERLLQDPR…VKSPLYQECL (118 aa). Positions 191 to 220 are disordered; the sequence is RPLREPGSSHLGSPDTARKKPKLKPGKSLP. The interval 297 to 424 is necessary for interaction with RABGEF1; the sequence is RPGKYCCVYL…LHRPGEKQLV (128 aa). 2 consecutive RBD domains span residues 300-371 and 373-443; these read KYCC…LENR and TFQL…LDTL. A disordered region spans residues 449–493; that stretch reads REASSIPPCRSQGCLPRTQTKDSHLPPLSSSLSVEDASGSTGKRQ. Ser-481 is subject to Phosphoserine. One can recognise a GoLoco domain in the interval 497-519; sequence IEGLVELLNRVQSSGAHDQRGLL.

In terms of assembly, interacts with GNAI1, GNAI2 and GNAI3. Interacts with GNAO1. Interacts (via RGS and GoLoco domains) with GNAI1; the interaction occurs in the centrosomes. Interaction with GNAI1 or GNAI3 (via active GTP- or inactive GDP-bound forms) prevents association of RGS14 with centrosomes or nuclear localization. Interacts with RABGEF1; the interactions is GTP-dependent. Interacts with RAP2A; the interactions is GTP-dependent and does not alter its function on G(i) alpha subunits either as GAP or as GDI. Associates with microtubules. Found in a complex with at least BRAF, HRAS, MAP2K1, MAPK3 and RGS14. Interacts with RIC8A (via C-terminus). Interacts (via RBD 1 domain) with HRAS (active GTP-bound form preferentially). Interacts (via RBD domains) with BRAF (via N-terminus); the interaction mediates the formation of a ternary complex with RAF1. Interacts (via RBD domains) with RAF1 (via N-terminus); the interaction mediates the formation of a ternary complex with BRAF. Interacts with KRAS (active GTP-bound form preferentially), MRAS (active GTP-bound form preferentially), NRAS (active GTP-bound form preferentially) and RRAS (active GTP-bound form preferentially). In terms of processing, phosphorylated by PKC. Phosphorylation is increased in presence of forskolin and may enhance the GDI activity on G(i) alpha subunit GNAI1. Expressed in neurons of the V2 secondary visual cortex area (at protein level). Expressed at high levels in the brain cortex, hippocampus, striatum, thalamus and substantia nigra, in the lung, and spleen. Low expression has been found in heart, liver, skeletal muscle and testis.

The protein localises to the nucleus. It localises to the PML body. Its subcellular location is the cytoplasm. It is found in the membrane. The protein resides in the cell membrane. The protein localises to the cytoskeleton. It localises to the microtubule organizing center. Its subcellular location is the centrosome. It is found in the spindle. The protein resides in the spindle pole. The protein localises to the cell projection. It localises to the dendrite. Its subcellular location is the dendritic spine. It is found in the postsynaptic density. Regulates G protein-coupled receptor signaling cascades. Inhibits signal transduction by increasing the GTPase activity of G protein alpha subunits, thereby driving them into their inactive GDP-bound form. Besides, modulates signal transduction via G protein alpha subunits by functioning as a GDP-dissociation inhibitor (GDI). Has GDI activity on G(i) alpha subunits GNAI1 and GNAI3, but not on GNAI2 and G(o)-alpha subunit GNAO1. Has GAP activity on GNAI0, GNAI2 and GNAI3. May act as a scaffold integrating G protein and Ras/Raf MAPkinase signaling pathways. Inhibits platelet-derived growth factor (PDGF)-stimulated ERK1/ERK2 phosphorylation; a process depending on its interaction with HRAS and that is reversed by G(i) alpha subunit GNAI1. Acts as a positive modulator of microtubule polymerisation and spindle organization through a G(i)-alpha-dependent mechanism. Plays a role in cell division; required for completion of the first mitotic division of the embryo. Involved in visual memory processing capacity; when overexpressed in the V2 secondary visual cortex area. Involved in hippocampal-based learning and memory; acts as a suppressor of synaptic plasticity in CA2 neurons. Required for the nerve growth factor (NGF)-mediated neurite outgrowth. Involved in stress resistance. This Rattus norvegicus (Rat) protein is Regulator of G-protein signaling 14 (Rgs14).